Here is a 248-residue protein sequence, read N- to C-terminus: Probable S-methyl-5'-thioinosine phosphorylase (248 aa).

Phosphate contacts are provided by residues threonine 12 and 54–55 (RH). Methionine 187 is a substrate binding site. Threonine 188 provides a ligand contact to phosphate. 211–213 (NWA) lines the substrate pocket.

This sequence belongs to the PNP/MTAP phosphorylase family. MTAP subfamily. As to quaternary structure, homotrimer.

It catalyses the reaction S-methyl-5'-thioinosine + phosphate = 5-(methylsulfanyl)-alpha-D-ribose 1-phosphate + hypoxanthine. It functions in the pathway purine metabolism; purine nucleoside salvage. Its function is as follows. Catalyzes the reversible phosphorylation of S-methyl-5'-thioinosine (MTI) to hypoxanthine and 5-methylthioribose-1-phosphate. Involved in the breakdown of S-methyl-5'-thioadenosine (MTA), a major by-product of polyamine biosynthesis. Catabolism of (MTA) occurs via deamination to MTI and phosphorolysis to hypoxanthine. The chain is Probable S-methyl-5'-thioinosine phosphorylase from Xylella fastidiosa (strain Temecula1 / ATCC 700964).